We begin with the raw amino-acid sequence, 490 residues long: Cytochrome P450 2C39 (490 aa).

The first 25 residues, 1–25 (MDLVTFLVLTLSSLILLSLWRQSCG), serve as a signal peptide directing secretion. Position 435 (Cys-435) interacts with heme.

The protein belongs to the cytochrome P450 family. Heme is required as a cofactor. Liver.

The protein resides in the endoplasmic reticulum membrane. The protein localises to the microsome membrane. It catalyses the reaction an organic molecule + reduced [NADPH--hemoprotein reductase] + O2 = an alcohol + oxidized [NADPH--hemoprotein reductase] + H2O + H(+). It carries out the reaction (5Z,8Z,11Z,14Z)-eicosatetraenoate + reduced [NADPH--hemoprotein reductase] + O2 = 11,12-epoxy-(5Z,8Z,14Z)-eicosatrienoate + oxidized [NADPH--hemoprotein reductase] + H2O + H(+). The enzyme catalyses (5Z,8Z,11Z,14Z)-eicosatetraenoate + reduced [NADPH--hemoprotein reductase] + O2 = 14,15-epoxy-(5Z,8Z,11Z)-eicosatrienoate + oxidized [NADPH--hemoprotein reductase] + H2O + H(+). It functions in the pathway lipid metabolism; arachidonate metabolism. Functionally, a cytochrome P450 monooxygenase that primarily catalyzes the epoxidation of 11,12 and 14,15 double bonds of (5Z,8Z,11Z,14Z)-eicosatetraenoic acid (arachidonate) forming 11,12- and 14,15-epoxyeicosatrienoic acids (11,12- and 14,15-EET) regioisomers. Mechanistically, uses molecular oxygen inserting one oxygen atom into a substrate, and reducing the second into a water molecule, with two electrons provided by NADPH via cytochrome P450 reductase (CPR; NADPH--hemoprotein reductase). The polypeptide is Cytochrome P450 2C39 (Mus musculus (Mouse)).